The chain runs to 374 residues: Cell wall integrity and stress response component 1 (374 aa).

Residues 1 to 29 (MVFLNSSPFKGRLLFFVYLLIISTRLVAA) form the signal peptide. Topologically, residues 30-292 (DMNTQYGCYL…SNHTSLNAGA (263 aa)) are extracellular. Positions 31-119 (MNTQYGCYLV…DLYWSVYLTG (89 aa)) constitute a WSC domain. Residues 132–236 (VSSTTSSSSS…SSSSSSRPSS (105 aa)) are disordered. Asn278 and Asn284 each carry an N-linked (GlcNAc...) asparagine glycan. Residues 293-313 (IVGIVIGCVAFAVVMALCIFL) form a helical membrane-spanning segment. Residues 314–374 (YFYFRRFKIR…RKILRVTNLN (61 aa)) lie on the Cytoplasmic side of the membrane. The residue at position 354 (Ser354) is a Phosphoserine.

In terms of processing, O-mannosylated.

It is found in the membrane. This Schizosaccharomyces pombe (strain 972 / ATCC 24843) (Fission yeast) protein is Cell wall integrity and stress response component 1 (wsc1).